We begin with the raw amino-acid sequence, 270 residues long: MKALKDFMRMKHEGEKISMLTAYDYPSAKQAEAAEIDMILVGDSLGMTVLGYESTVDVTLDDMKHHARAVRRGAKDTYVVVDMPFGTIGIDASTDTAFAIELYRDTHANAIKIEGAHAAPVIKKCHDIGIPVVAHLGLTPQSYGITGYQLQATSKEAAKQLIEDAKLVEKSGAIMLVLEAIPSDLAHVITESLTIPVIGIGAGVGTNGQVLVYHDVLNYGVEHKPKFVKRYGDFSIGVESIKNFHDEVKRQAFPTEEYTYKKQIMNEVDE.

Residues Asp43 and Asp82 each coordinate Mg(2+). 3-methyl-2-oxobutanoate is bound by residues 43 to 44, Asp82, and Lys112; that span reads DS. Glu114 contributes to the Mg(2+) binding site. The Proton acceptor role is filled by Glu179.

It belongs to the PanB family. Homodecamer; pentamer of dimers. The cofactor is Mg(2+).

It localises to the cytoplasm. It carries out the reaction 3-methyl-2-oxobutanoate + (6R)-5,10-methylene-5,6,7,8-tetrahydrofolate + H2O = 2-dehydropantoate + (6S)-5,6,7,8-tetrahydrofolate. It participates in cofactor biosynthesis; (R)-pantothenate biosynthesis; (R)-pantoate from 3-methyl-2-oxobutanoate: step 1/2. Its function is as follows. Catalyzes the reversible reaction in which hydroxymethyl group from 5,10-methylenetetrahydrofolate is transferred onto alpha-ketoisovalerate to form ketopantoate. The polypeptide is 3-methyl-2-oxobutanoate hydroxymethyltransferase (Oceanobacillus iheyensis (strain DSM 14371 / CIP 107618 / JCM 11309 / KCTC 3954 / HTE831)).